The primary structure comprises 296 residues: Urease operon transcriptional activator (296 aa).

Residues 171–268 (QAITHLITQE…NMTPSQFRLQ (98 aa)) form the HTH araC/xylS-type domain. 2 DNA-binding regions (H-T-H motif) span residues 188–209 (DDVA…NREG) and 235–258 (VFQI…KRKY).

Functionally, positive regulator of the expression of the urease operon. The sequence is that of Urease operon transcriptional activator (ureR) from Escherichia coli.